Consider the following 339-residue polypeptide: Quinolinate synthase (339 aa).

Residues His-63 and Ser-81 each contribute to the iminosuccinate site. Position 126 (Cys-126) interacts with [4Fe-4S] cluster. Residues 152–154 (YVN) and Ser-169 contribute to the iminosuccinate site. Residue Cys-211 coordinates [4Fe-4S] cluster. Iminosuccinate contacts are provided by residues 237 to 239 (HPE) and Thr-254. Residue Cys-297 coordinates [4Fe-4S] cluster.

The protein belongs to the quinolinate synthase family. Type 2 subfamily. The cofactor is [4Fe-4S] cluster.

It is found in the cytoplasm. It catalyses the reaction iminosuccinate + dihydroxyacetone phosphate = quinolinate + phosphate + 2 H2O + H(+). It participates in cofactor biosynthesis; NAD(+) biosynthesis; quinolinate from iminoaspartate: step 1/1. Catalyzes the condensation of iminoaspartate with dihydroxyacetone phosphate to form quinolinate. This chain is Quinolinate synthase, found in Xylella fastidiosa (strain Temecula1 / ATCC 700964).